The following is a 433-amino-acid chain: Shikimate O-hydroxycinnamoyltransferase (433 aa).

Catalysis depends on His-153, which acts as the Proton acceptor. Residues 252–255 (SSYE), 284–290 (DGRSRLR), and 370–373 (SWVR) contribute to the 4-coumaroyl-CoA site. The active-site Proton acceptor is Asp-380.

This sequence belongs to the plant acyltransferase family.

It carries out the reaction shikimate + 4-coumaroyl-CoA = trans-4-coumaroylshikimate + CoA. In terms of biological role, acyltransferase involved in the biosynthesis of lignin. Accepts caffeoyl-CoA and p-coumaroyl-CoA as substrates and transfers the acyl group on both shikimate and quinate acceptors. This is Shikimate O-hydroxycinnamoyltransferase (HST) from Arabidopsis thaliana (Mouse-ear cress).